The chain runs to 531 residues: Jacalin-related lectin 16 (531 aa).

Jacalin-type lectin domains follow at residues 1–87 (MDRS…YFTW), 90–232 (PTKM…YFTT), 235–378 (LISL…YFRP), and 385–528 (TEKV…NVLP).

It belongs to the jacalin lectin family.

This Arabidopsis thaliana (Mouse-ear cress) protein is Jacalin-related lectin 16 (JAL16).